A 476-amino-acid chain; its full sequence is Ankyrin repeat, SAM and basic leucine zipper domain-containing protein 1 (476 aa).

2 positions are modified to phosphoserine: Ser-18 and Ser-21. ANK repeat units follow at residues Glu-46–Ser-75, Tyr-79–Phe-108, Asp-111–Val-145, Arg-149–Thr-178, Asn-182–Leu-211, and Asp-215–Gly-244. The SAM domain maps to Ser-273 to Glu-335.

In terms of assembly, interacts with DDX4, PIWIL1, RANBP9 and TDRD1.

The protein localises to the cytoplasm. In terms of biological role, plays a central role during spermatogenesis by repressing transposable elements and preventing their mobilization, which is essential for the germline integrity. Acts via the piRNA metabolic process, which mediates the repression of transposable elements during meiosis by forming complexes composed of piRNAs and Piwi proteins and governs the methylation and subsequent repression of transposons. Its association with pi-bodies suggests a participation in the primary piRNAs metabolic process. Required prior to the pachytene stage to facilitate the production of multiple types of piRNAs, including those associated with repeats involved in the regulation of retrotransposons. May act by mediating protein-protein interactions during germ cell maturation. The sequence is that of Ankyrin repeat, SAM and basic leucine zipper domain-containing protein 1 (ASZ1) from Dasypus novemcinctus (Nine-banded armadillo).